A 352-amino-acid polypeptide reads, in one-letter code: Glucose-6-phosphatase catalytic subunit 1 (352 aa).

At 1–27 (MDLLHSWGVELAVYLQTRYGKYEGLFD) the chain is on the lumenal side. A helical transmembrane segment spans residues 28–48 (LASTVADLHTTFFWLFPIWFH). The Cytoplasmic portion of the chain corresponds to 49–56 (LRRDTALR). The helical transmembrane segment at 57-77 (LIWVAVIGDWLNLVLKWVLFG) threads the bilayer. At 78–113 (ERPYWWVHETKFYGAGPAPSLQQFPITCETGPGSPS) the chain is on the lumenal side. Residue R79 participates in substrate binding. The chain crosses the membrane as a helical span at residues 114–134 (GHAMGAAGVWYVMVTALLSIA). Catalysis depends on H115, which acts as the Proton donor. Over 135–141 (REKQCPP) the chain is Cytoplasmic. The chain crosses the membrane as a helical span at residues 142-162 (LLYRFLYIGLWMLMGLVELVV). Residues 163-166 (CISR) lie on the Lumenal side of the membrane. Position 166 (R166) interacts with substrate. Residues 167–187 (VYMAAHFPHQVIAGIITGTLV) traverse the membrane as a helical segment. Residue H172 is the Nucleophile of the active site. Over 188 to 205 (AEVVSKEKWIYSASLKKY) the chain is Cytoplasmic. The helical transmembrane segment at 206 to 226 (FLITLFLTSFAVGFYVLLKAL) threads the bilayer. At 227-256 (DVDLLWTMEKAQKWCIRPEWVHLDSAPFAS) the chain is on the lumenal side. Residues 257-276 (LLRNMGSLFGLGLGLHSPFY) form a helical membrane-spanning segment. The Cytoplasmic segment spans residues 277-289 (KTTKMRIMSAPLR). The helical transmembrane segment at 290–310 (IGCIVISVSLLHLLDGWTFSP) threads the bilayer. Residues 311–324 (ENHMTFYALSFGKS) are Lumenal-facing. A helical membrane pass occupies residues 325 to 345 (AVALLIPTTLVPWALSKIYPV). The Cytoplasmic portion of the chain corresponds to 346-352 (KTEGKNL). The Prevents secretion from ER motif lies at 349-352 (GKNL).

It belongs to the glucose-6-phosphatase family.

It is found in the endoplasmic reticulum membrane. The catalysed reaction is D-glucose 6-phosphate + H2O = D-glucose + phosphate. Its pathway is carbohydrate biosynthesis; gluconeogenesis. Functionally, hydrolyzes glucose-6-phosphate to glucose in the endoplasmic reticulum. Forms with the glucose-6-phosphate transporter (SLC37A4/G6PT) the complex responsible for glucose production in the terminal step of glycogenolysis and gluconeogenesis. Hence, it is the key enzyme in homeostatic regulation of blood glucose levels. The sequence is that of Glucose-6-phosphatase catalytic subunit 1 (g6pc1) from Haplochromis nubilus (Blue Victoria mouthbrooder).